An 860-amino-acid polypeptide reads, in one-letter code: DNA mismatch repair protein MutS (860 aa).

625 to 632 serves as a coordination point for ATP; the sequence is GPNMGGKS.

This sequence belongs to the DNA mismatch repair MutS family.

Its function is as follows. This protein is involved in the repair of mismatches in DNA. It is possible that it carries out the mismatch recognition step. This protein has a weak ATPase activity. This is DNA mismatch repair protein MutS from Aeromonas hydrophila subsp. hydrophila (strain ATCC 7966 / DSM 30187 / BCRC 13018 / CCUG 14551 / JCM 1027 / KCTC 2358 / NCIMB 9240 / NCTC 8049).